The primary structure comprises 315 residues: L-lactate dehydrogenase (315 aa).

Residues Val-17, Asp-38, Lys-43, Tyr-69, and Gly-83–Ala-84 contribute to the NAD(+) site. Substrate-binding residues include Gln-86 and Arg-92. Residues Ser-105, Ala-122–Asn-124, and Ser-147 each bind NAD(+). Asn-124–Asp-127 is a substrate binding site. Residue Asp-152–Arg-155 coordinates substrate. 2 residues coordinate beta-D-fructose 1,6-bisphosphate: Arg-157 and His-172. The active-site Proton acceptor is the His-179. Phosphotyrosine is present on Tyr-223. Thr-232 lines the substrate pocket.

This sequence belongs to the LDH/MDH superfamily. LDH family. Homotetramer.

The protein localises to the cytoplasm. The enzyme catalyses (S)-lactate + NAD(+) = pyruvate + NADH + H(+). It functions in the pathway fermentation; pyruvate fermentation to lactate; (S)-lactate from pyruvate: step 1/1. Its activity is regulated as follows. Allosterically activated by fructose 1,6-bisphosphate (FBP). In terms of biological role, catalyzes the conversion of lactate to pyruvate. The polypeptide is L-lactate dehydrogenase (Macrococcus caseolyticus (strain JCSC5402) (Macrococcoides caseolyticum)).